Reading from the N-terminus, the 576-residue chain is RNA-binding post-transcriptional regulator cip2 (576 aa).

An RRM domain is found at 232–310 (TAIVIKNIPF…RRLRVEWKRQ (79 aa)). The 66-residue stretch at 355-420 (DPAILNVYSH…AKQVVITMPS (66 aa)) folds into the R3H domain.

In terms of assembly, interacts with csx1. Post-translationally, phosphorylated by sty1.

The protein localises to the cytoplasm. In terms of biological role, regulates global gene expression after oxidative stress. Interacts and stabilizes mRNAs and may regulate their transition between different cytoplasmic components after oxidative stress. The polypeptide is RNA-binding post-transcriptional regulator cip2 (cip2) (Schizosaccharomyces pombe (strain 972 / ATCC 24843) (Fission yeast)).